An 882-amino-acid polypeptide reads, in one-letter code: HTH-type transcriptional regulator AlkS (882 aa).

ATP is bound at residue 51-58 (APPGYGKT). In terms of domain architecture, HTH luxR-type spans 815–880 (ENKADALLTR…QATIEAERQG (66 aa)). A DNA-binding region (H-T-H motif) is located at residues 839–858 (NKQIATNMHVTEDAIKWHMR).

It functions in the pathway hydrocarbon metabolism; alkane degradation. In terms of biological role, this protein activates the expression of alkBFGHJKL operon in the presence of alkanes. This is HTH-type transcriptional regulator AlkS (alkS) from Ectopseudomonas oleovorans (Pseudomonas oleovorans).